Consider the following 158-residue polypeptide: Endoribonuclease YbeY (158 aa).

Positions 124, 128, and 134 each coordinate Zn(2+).

Belongs to the endoribonuclease YbeY family. It depends on Zn(2+) as a cofactor.

The protein resides in the cytoplasm. Its function is as follows. Single strand-specific metallo-endoribonuclease involved in late-stage 70S ribosome quality control and in maturation of the 3' terminus of the 16S rRNA. In Latilactobacillus sakei subsp. sakei (strain 23K) (Lactobacillus sakei subsp. sakei), this protein is Endoribonuclease YbeY.